The chain runs to 527 residues: MVTKESIEVIAQSIGLSTLSPDVSAALAPDVEYRVREVMQVYHQLQLYFCPLISSLTCRRNLQEAIKCMRHARRTTLMAHDVDSALHFRNLEPTSGSKSMRFKRAPENRDLYFFDDKDVELKNVIEAPLPNAPPDASVFLHWLAIDGIQPSIPQNSPLQAISDLKRSEYKDDGLAARQVLSKDLQIYFDKVTEWALTQSGSTLFRQALASLEIDPGLHPLVPFFTSFIAEEIVKNMDNYPILLALMRLARSLLHNPHVHIEPYLHQLMPSIITCLIAKRLGRRSSDNHWDLRNFTASTVASTCKRFGHVYHNLLPRVTRSLLHTFLDPTKALPQHYGAIQGMVALGLNMVRFLVLPNLGPYLLLLLPEMGLEKQKEEAKRHGAWLVYGALMVAAGRCLYERLKTSETLLSPPTSSVWKTNGKLTSPRQSKRKASSDNLTHQPPLKKIAVGGIIQMSSTQMQMRGTTTVPQQSHTDADARHHNSPSTIAPKTSAAAGTDVDNYLFPLFEYFGESMLMFTPTHELSFFL.

One can recognise a Histone-fold domain in the interval 3-99; sequence TKESIEVIAQ…NLEPTSGSKS (97 aa). Disordered regions lie at residues 410–442 and 462–492; these read SPPT…THQP and MRGT…PKTS. Composition is skewed to polar residues over residues 416-427 and 462-473; these read VWKTNGKLTSPR and MRGTTTVPQQSH.

It belongs to the TAF6 family. In terms of assembly, component of the TFIID complex. TFIID is composed of TATA binding protein (TBP) and a number of TBP-associated factors (TAFs) whose MWs range from 14-217 kDa. Interacts with TAF5 and TAF9. As to expression, expressed in roots, leaves, inflorescences and siliques.

Its subcellular location is the nucleus. In terms of biological role, TAFs are components of the transcription factor IID (TFIID) complex that is essential for mediating regulation of RNA polymerase transcription. Not redundant with TAF6. In Arabidopsis thaliana (Mouse-ear cress), this protein is Transcription initiation factor TFIID subunit 6b (TAF6B).